Reading from the N-terminus, the 146-residue chain is Anti-sigma F factor (146 aa).

The protein belongs to the anti-sigma-factor family.

The catalysed reaction is L-seryl-[protein] + ATP = O-phospho-L-seryl-[protein] + ADP + H(+). It carries out the reaction L-threonyl-[protein] + ATP = O-phospho-L-threonyl-[protein] + ADP + H(+). Binds to sigma F and blocks its ability to form an RNA polymerase holoenzyme (E-sigma F). Phosphorylates SpoIIAA on a serine residue. This phosphorylation may enable SpoIIAA to act as an anti-anti-sigma factor that counteracts SpoIIAB and thus releases sigma F from inhibition. The chain is Anti-sigma F factor from Anoxybacillus flavithermus (strain DSM 21510 / WK1).